Reading from the N-terminus, the 743-residue chain is MEHTYQYAWIIPFVPLPVPMLIGVGLLLFPTATKNLRRVWAFHSVLLLSIVMIFSIDLSIQQINSSSIYQYVWSWVINNDFSLELGYLIDPLTSIMLILITTVGIMVLIYSDSYMSHDQGYLRFFAYMSFFSTSMLGLVTSSNLIQIYIFWELVGMCSYLLIGFWFTRPLAANACQKAFVTNRIGDLGLLLGILGFYWITGSFEFRDLFQIVTNLIYNNEVNLVFLTICAVLLFAGAVAKSAQFPLHVWLPDAMEGPTPISALIHAATMVAAGIFLVARLLPLFIVIPYILNLISFIGIITLLLGATLALAQKDIKRSLAYSTMSQLGYMMLALGMGSYRSALFHLITHAYPKALLFLGSGSVIHSMETVVGYSPDKSQNMVLMGGLTKHVPITKTAFFLGTLSLCGIPPLACFWSKDEILNDSWLYSPIFAIIACSTAGLTAFYMFRIYLLTFEGHLNVHFQNYSGKKNISFYSISLWGKGGLKTVNKNFCLLTLLTTNNESASFFSNKTYRIDENIRKMTRPFMTITHFGNKNTYSYPYESDNTMLLPLLVLVLFTLFVGAIGIPFNQEGMDLDILSKWLSPSINLLHQDLNNSMDWYEFVKDAIFSVSIAYFGIVIASFLYKPVYSSLQNLDLINSFVKTGPNRIFWDKIINVIYDWSYNRGYIDAFYATSLTGGIRGLAELTNFFDRRVIDGITNGVGVMSFFVGEGIRYLGGGRISSYLFLYLSYVSIFLLIYYFLNL.

The next 14 helical transmembrane spans lie at 9 to 29 (WIIP…LLLF), 40 to 60 (WAFH…DLSI), 89 to 109 (IDPL…MVLI), 125 to 145 (FAYM…SNLI), 147 to 167 (IYIF…FWFT), 184 to 204 (IGDL…GSFE), 219 to 239 (NEVN…GAVA), 258 to 278 (TPIS…FLVA), 280 to 300 (LLPL…IGII), 396 to 416 (TAFF…CFWS), 425 to 445 (WLYS…TAFY), 548 to 568 (LLPL…GIPF), 607 to 627 (IFSV…YKPV), and 723 to 743 (YLFL…FLNL).

This sequence belongs to the complex I subunit 5 family. In terms of assembly, NDH is composed of at least 16 different subunits, 5 of which are encoded in the nucleus.

It is found in the plastid. The protein resides in the chloroplast thylakoid membrane. The enzyme catalyses a plastoquinone + NADH + (n+1) H(+)(in) = a plastoquinol + NAD(+) + n H(+)(out). It catalyses the reaction a plastoquinone + NADPH + (n+1) H(+)(in) = a plastoquinol + NADP(+) + n H(+)(out). NDH shuttles electrons from NAD(P)H:plastoquinone, via FMN and iron-sulfur (Fe-S) centers, to quinones in the photosynthetic chain and possibly in a chloroplast respiratory chain. The immediate electron acceptor for the enzyme in this species is believed to be plastoquinone. Couples the redox reaction to proton translocation, and thus conserves the redox energy in a proton gradient. The polypeptide is NAD(P)H-quinone oxidoreductase subunit 5, chloroplastic (ndhF) (Carpenteria californica (Tree anemone)).